We begin with the raw amino-acid sequence, 142 residues long: UPF0102 protein Synpcc7942_0312 (142 aa).

It belongs to the UPF0102 family.

This chain is UPF0102 protein Synpcc7942_0312, found in Synechococcus elongatus (strain ATCC 33912 / PCC 7942 / FACHB-805) (Anacystis nidulans R2).